The chain runs to 437 residues: Trigger factor (437 aa).

Residues 163–248 (GDIAVINFEG…LNQIKAKVLP (86 aa)) enclose the PPIase FKBP-type domain.

The protein belongs to the FKBP-type PPIase family. Tig subfamily.

Its subcellular location is the cytoplasm. It carries out the reaction [protein]-peptidylproline (omega=180) = [protein]-peptidylproline (omega=0). Its function is as follows. Involved in protein export. Acts as a chaperone by maintaining the newly synthesized protein in an open conformation. Functions as a peptidyl-prolyl cis-trans isomerase. The chain is Trigger factor from Bdellovibrio bacteriovorus (strain ATCC 15356 / DSM 50701 / NCIMB 9529 / HD100).